The sequence spans 95 residues: uncharacterized protein (95 aa).

Positions 1–64 (MEIDDIFASK…PKGASGRKRT (64 aa)) are disordered. A compositionally biased stretch (basic and acidic residues) spans 18 to 28 (KSNDSKSEAKA). Over residues 35 to 49 (TKSTPSRPKPTNNQD) the composition is skewed to polar residues.

This is an uncharacterized protein from Schizosaccharomyces pombe (strain 972 / ATCC 24843) (Fission yeast).